A 204-amino-acid polypeptide reads, in one-letter code: CASP-like protein 3A1 (204 aa).

At 1–39 (MGSIGNGRNGSEVGIQIPAMGNKEVLERPAIPRWPRLGV) the chain is on the cytoplasmic side. Residues 40 to 60 (VMVATRAVALVMAVLSMALMI) form a helical membrane-spanning segment. Over 61–88 (SAKQRGSLKIFGIEIPLYANWSFSDSLE) the chain is Extracellular. Asn80 carries an N-linked (GlcNAc...) asparagine glycan. The chain crosses the membrane as a helical span at residues 89–109 (YLVGMSAVSAAYCLAQLLLTA). Residues 110–124 (HKAVKNAPVVQSRNY) are Cytoplasmic-facing. The chain crosses the membrane as a helical span at residues 125–145 (AWLLFTGDQIFAYAMMSAGSA). Residues 146-179 (AAAVANLNRTGIRHTALPNFCKPLPRFCDLSAAS) lie on the Extracellular side of the membrane. The N-linked (GlcNAc...) asparagine glycan is linked to Asn153. The chain crosses the membrane as a helical span at residues 180 to 200 (IACAFLSCIFLAASAVIDVIW). The Cytoplasmic portion of the chain corresponds to 201-204 (LSNM).

This sequence belongs to the Casparian strip membrane proteins (CASP) family. As to quaternary structure, homodimer and heterodimers.

It localises to the cell membrane. The polypeptide is CASP-like protein 3A1 (Oryza sativa subsp. indica (Rice)).